Reading from the N-terminus, the 445-residue chain is Glutamate-1-semialdehyde 2,1-aminomutase (445 aa).

At Lys-263 the chain carries N6-(pyridoxal phosphate)lysine.

Belongs to the class-III pyridoxal-phosphate-dependent aminotransferase family. HemL subfamily. Pyridoxal 5'-phosphate serves as cofactor.

The protein localises to the cytoplasm. It catalyses the reaction (S)-4-amino-5-oxopentanoate = 5-aminolevulinate. It participates in porphyrin-containing compound metabolism; protoporphyrin-IX biosynthesis; 5-aminolevulinate from L-glutamyl-tRNA(Glu): step 2/2. This chain is Glutamate-1-semialdehyde 2,1-aminomutase, found in Haloarcula marismortui (strain ATCC 43049 / DSM 3752 / JCM 8966 / VKM B-1809) (Halobacterium marismortui).